The sequence spans 220 residues: Glycerol-3-phosphate acyltransferase (220 aa).

Transmembrane regions (helical) follow at residues 11–31 (INVIFTLLGYLIGGIPFGYAL), 70–90 (LLVLILDLFKGMFAVFLSKLF), 96–116 (LQWMVAIASILGHCYSPFLNF), 127–147 (GSVVLLIPIESLIGLTVWFFV), 153–173 (ISSLASILGVGTATVLIFFVP), and 193–213 (MVLIFIFTLIKHAGNIFNLLA).

The protein belongs to the PlsY family. Probably interacts with PlsX.

The protein localises to the cell inner membrane. The catalysed reaction is an acyl phosphate + sn-glycerol 3-phosphate = a 1-acyl-sn-glycero-3-phosphate + phosphate. The protein operates within lipid metabolism; phospholipid metabolism. Functionally, catalyzes the transfer of an acyl group from acyl-phosphate (acyl-PO(4)) to glycerol-3-phosphate (G3P) to form lysophosphatidic acid (LPA). This enzyme utilizes acyl-phosphate as fatty acyl donor, but not acyl-CoA or acyl-ACP. In Helicobacter pylori (strain ATCC 700392 / 26695) (Campylobacter pylori), this protein is Glycerol-3-phosphate acyltransferase.